The primary structure comprises 59 residues: Large ribosomal subunit protein uL30 (59 aa).

It belongs to the universal ribosomal protein uL30 family. Part of the 50S ribosomal subunit.

The protein is Large ribosomal subunit protein uL30 of Solidesulfovibrio magneticus (strain ATCC 700980 / DSM 13731 / RS-1) (Desulfovibrio magneticus).